The chain runs to 53 residues: UPF0391 membrane protein azo1750 (53 aa).

Transmembrane regions (helical) follow at residues 6–26 and 30–50; these read VIFL…IAAG and IAKI…VLGM.

The protein belongs to the UPF0391 family.

The protein localises to the cell membrane. This chain is UPF0391 membrane protein azo1750, found in Azoarcus sp. (strain BH72).